We begin with the raw amino-acid sequence, 442 residues long: tRNA-2-methylthio-N(6)-dimethylallyladenosine synthase (442 aa).

The MTTase N-terminal domain maps to 2–120 (KKVFIRTFGC…LPKMIVDKET (119 aa)). Cys11, Cys49, Cys83, Cys157, Cys161, and Cys164 together coordinate [4Fe-4S] cluster. The region spanning 143–375 (RVEGGAAFVS…NEVIEAETAR (233 aa)) is the Radical SAM core domain. One can recognise a TRAM domain in the interval 378–441 (QTMIGTVQRC…TFSLRGKVVE (64 aa)).

Belongs to the methylthiotransferase family. MiaB subfamily. Monomer. [4Fe-4S] cluster is required as a cofactor.

Its subcellular location is the cytoplasm. It catalyses the reaction N(6)-dimethylallyladenosine(37) in tRNA + (sulfur carrier)-SH + AH2 + 2 S-adenosyl-L-methionine = 2-methylsulfanyl-N(6)-dimethylallyladenosine(37) in tRNA + (sulfur carrier)-H + 5'-deoxyadenosine + L-methionine + A + S-adenosyl-L-homocysteine + 2 H(+). Functionally, catalyzes the methylthiolation of N6-(dimethylallyl)adenosine (i(6)A), leading to the formation of 2-methylthio-N6-(dimethylallyl)adenosine (ms(2)i(6)A) at position 37 in tRNAs that read codons beginning with uridine. This chain is tRNA-2-methylthio-N(6)-dimethylallyladenosine synthase, found in Neisseria meningitidis serogroup C / serotype 2a (strain ATCC 700532 / DSM 15464 / FAM18).